A 73-amino-acid polypeptide reads, in one-letter code: UPF0337 protein lp_1708 (73 aa).

Composition is skewed to basic and acidic residues over residues 1-35 (MSDV…REAQ) and 44-73 (KAKD…KSDD). The tract at residues 1 to 73 (MSDVNKKFDS…KDKMKKKSDD (73 aa)) is disordered.

Belongs to the UPF0337 (CsbD) family.

The polypeptide is UPF0337 protein lp_1708 (Lactiplantibacillus plantarum (strain ATCC BAA-793 / NCIMB 8826 / WCFS1) (Lactobacillus plantarum)).